A 635-amino-acid chain; its full sequence is Early transcription factor 70 kDa subunit (635 aa).

Residues 32-185 (RSIIDENKSV…SNIISLMSDE (154 aa)) enclose the Helicase ATP-binding domain. 45–52 (HIMGSGKT) lines the ATP pocket. The DEXH box motif lies at 135–138 (DEAH). The Helicase C-terminal domain maps to 326 to 505 (KFKYFINKIE…TLPFDIKKLL (180 aa)).

Belongs to the helicase family. VETF subfamily. Heterodimer of a 70 kDa and a 82 kDa subunit. Part of the early transcription complex composed of ETF, RAP94, and the DNA-directed RNA polymerase.

Its subcellular location is the virion. Its function is as follows. Acts with RNA polymerase to initiate transcription from early gene promoters. Is recruited by the RPO-associated protein of 94 kDa (RAP94) to form the early transcription complex, which also contains the core RNA polymerase. ETF heterodimer binds to early gene promoters. This Oryctolagus cuniculus (Rabbit) protein is Early transcription factor 70 kDa subunit (VETFS).